The chain runs to 90 residues: UPF0213 protein lin0209 (90 aa).

Residues 5–80 (NEHFFYVLKC…KKLSRKNKDS (76 aa)) form the GIY-YIG domain.

The protein belongs to the UPF0213 family.

The polypeptide is UPF0213 protein lin0209 (Listeria innocua serovar 6a (strain ATCC BAA-680 / CLIP 11262)).